The following is a 121-amino-acid chain: Small ribosomal subunit protein uS13 (121 aa).

A disordered region spans residues 91–121; sequence HRRGLPVRGQNSKNNARTRKGPRRTVANKKK. A compositionally biased stretch (basic residues) spans 106 to 121; it reads ARTRKGPRRTVANKKK.

The protein belongs to the universal ribosomal protein uS13 family. As to quaternary structure, part of the 30S ribosomal subunit. Forms a loose heterodimer with protein S19. Forms two bridges to the 50S subunit in the 70S ribosome.

In terms of biological role, located at the top of the head of the 30S subunit, it contacts several helices of the 16S rRNA. In the 70S ribosome it contacts the 23S rRNA (bridge B1a) and protein L5 of the 50S subunit (bridge B1b), connecting the 2 subunits; these bridges are implicated in subunit movement. Contacts the tRNAs in the A and P-sites. The chain is Small ribosomal subunit protein uS13 from Bacillus mycoides (strain KBAB4) (Bacillus weihenstephanensis).